Reading from the N-terminus, the 141-residue chain is uncharacterized protein (141 aa).

Transmembrane regions (helical) follow at residues 7-27 (FWALLSAAFAALTAVFAKVGV), 34-54 (FATLIRTVVILCVIAAIVAAT), 69-89 (LFLALSGLATGASWLAYFRAL), 97-117 (VAPLDKLSIVMVAIFGVLFLG), and 121-141 (NLMNWLGVAFIAAGALLLAVF). One can recognise an EamA domain in the interval 14–140 (AFAALTAVFA…IAAGALLLAV (127 aa)).

Belongs to the EamA transporter family.

The protein resides in the cell membrane. This is an uncharacterized protein from Sinorhizobium sp.